Reading from the N-terminus, the 530-residue chain is ATP synthase subunit alpha 3 (530 aa).

Residue G174–T181 participates in ATP binding. Over residues T507–A522 the composition is skewed to low complexity. The disordered stretch occupies residues T507–P530.

The protein belongs to the ATPase alpha/beta chains family. F-type ATPases have 2 components, CF(1) - the catalytic core - and CF(0) - the membrane proton channel. CF(1) has five subunits: alpha(3), beta(3), gamma(1), delta(1), epsilon(1). CF(0) has three main subunits: a(1), b(2) and c(9-12). The alpha and beta chains form an alternating ring which encloses part of the gamma chain. CF(1) is attached to CF(0) by a central stalk formed by the gamma and epsilon chains, while a peripheral stalk is formed by the delta and b chains.

Its subcellular location is the cell inner membrane. The catalysed reaction is ATP + H2O + 4 H(+)(in) = ADP + phosphate + 5 H(+)(out). Functionally, produces ATP from ADP in the presence of a proton gradient across the membrane. The alpha chain is a regulatory subunit. The protein is ATP synthase subunit alpha 3 of Paraburkholderia xenovorans (strain LB400).